Consider the following 151-residue polypeptide: Macrodomain Ter protein (151 aa).

It belongs to the MatP family. Homodimer.

Its subcellular location is the cytoplasm. Required for spatial organization of the terminus region of the chromosome (Ter macrodomain) during the cell cycle. Prevents early segregation of duplicated Ter macrodomains during cell division. Binds specifically to matS, which is a 13 bp signature motif repeated within the Ter macrodomain. The polypeptide is Macrodomain Ter protein (Vibrio atlanticus (strain LGP32) (Vibrio splendidus (strain Mel32))).